A 268-amino-acid polypeptide reads, in one-letter code: Imidazole glycerol phosphate synthase subunit HisF (268 aa).

Residues Asp-12 and Asp-131 contribute to the active site.

This sequence belongs to the HisA/HisF family. In terms of assembly, heterodimer of HisH and HisF.

It is found in the cytoplasm. It carries out the reaction 5-[(5-phospho-1-deoxy-D-ribulos-1-ylimino)methylamino]-1-(5-phospho-beta-D-ribosyl)imidazole-4-carboxamide + L-glutamine = D-erythro-1-(imidazol-4-yl)glycerol 3-phosphate + 5-amino-1-(5-phospho-beta-D-ribosyl)imidazole-4-carboxamide + L-glutamate + H(+). Its pathway is amino-acid biosynthesis; L-histidine biosynthesis; L-histidine from 5-phospho-alpha-D-ribose 1-diphosphate: step 5/9. IGPS catalyzes the conversion of PRFAR and glutamine to IGP, AICAR and glutamate. The HisF subunit catalyzes the cyclization activity that produces IGP and AICAR from PRFAR using the ammonia provided by the HisH subunit. This is Imidazole glycerol phosphate synthase subunit HisF from Methanoregula boonei (strain DSM 21154 / JCM 14090 / 6A8).